The chain runs to 70 residues: Large ribosomal subunit protein bL31 (70 aa).

Cys16, Cys18, Cys37, and Cys40 together coordinate Zn(2+).

It belongs to the bacterial ribosomal protein bL31 family. Type A subfamily. In terms of assembly, part of the 50S ribosomal subunit. The cofactor is Zn(2+).

Its function is as follows. Binds the 23S rRNA. The sequence is that of Large ribosomal subunit protein bL31 from Ectopseudomonas mendocina (strain ymp) (Pseudomonas mendocina).